Consider the following 106-residue polypeptide: MAVKIRLARFGAKKRPFYRIVVADSRAPRDGRFIEKIGQYDPMLPKDNKNRVVVKADRLKHWLSVGAQATERVLWFIKKGIVTLETEPKKTEKKKVENEKAQGQEA.

It belongs to the bacterial ribosomal protein bS16 family.

This is Small ribosomal subunit protein bS16 from Wolbachia pipientis wMel.